A 308-amino-acid chain; its full sequence is Membrane protein insertase YidC 1 (308 aa).

The signal sequence occupies residues Met1–Gly22. Residue Cys23 is the site of N-palmitoyl cysteine attachment. Residue Cys23 is the site of S-diacylglycerol cysteine attachment. Transmembrane regions (helical) follow at residues Phe60–Ile80, Phe135–Phe155, Tyr168–Tyr188, Met211–Phe225, and Val230–Val252. Positions Glu263–Arg308 are disordered. Over residues Ser269–Ser278 the composition is skewed to polar residues. Residues Ser293 to Arg308 show a composition bias toward basic residues.

This sequence belongs to the OXA1/ALB3/YidC family. Type 2 subfamily.

It localises to the cell membrane. Required for the insertion and/or proper folding and/or complex formation of integral membrane proteins into the membrane. Involved in integration of membrane proteins that insert both dependently and independently of the Sec translocase complex, as well as at least some lipoproteins. The polypeptide is Membrane protein insertase YidC 1 (Streptococcus pneumoniae (strain ATCC BAA-255 / R6)).